The following is a 157-amino-acid chain: MKILYPGTFDPLTNGHIDLIERAEKIFGNLVVAVLENTSKTPTFNLQRRIIQIKNSLSHLPNIEVISYSGLTVDCANELKANLILRGLRAMSDFEYELQIAHTNKSLNNDIETIFLSTNTNYSFLSSSLVKEVAKFGGEINHMVPPSVERDLKEYFK.

Residue Thr8 participates in substrate binding. ATP-binding positions include 8-9 (TF) and His16. Positions 40, 72, and 86 each coordinate substrate. Residues 87-89 (GLR), Glu97, and 122-128 (YSFLSSS) contribute to the ATP site.

This sequence belongs to the bacterial CoaD family. In terms of assembly, homohexamer. Mg(2+) serves as cofactor.

Its subcellular location is the cytoplasm. The enzyme catalyses (R)-4'-phosphopantetheine + ATP + H(+) = 3'-dephospho-CoA + diphosphate. Its pathway is cofactor biosynthesis; coenzyme A biosynthesis; CoA from (R)-pantothenate: step 4/5. Reversibly transfers an adenylyl group from ATP to 4'-phosphopantetheine, yielding dephospho-CoA (dPCoA) and pyrophosphate. The polypeptide is Phosphopantetheine adenylyltransferase (Prochlorococcus marinus (strain MIT 9215)).